A 3527-amino-acid polypeptide reads, in one-letter code: BEACH domain-containing protein A2 (3527 aa).

Disordered regions lie at residues 25 to 46, 385 to 423, and 454 to 490; these read AGEA…PSSS, SSPH…LNSR, and ESSG…CEQG. The span at 28 to 46 shows a compositional bias: low complexity; sequence AISDPTTPPSSSQASPSSS. Low complexity predominate over residues 455 to 469; that stretch reads SSGTSTSLLSQTKLT. The span at 472-481 shows a compositional bias: polar residues; that stretch reads SRRQTPSANN. LRR repeat units lie at residues 1447–1470, 1499–1522, 1542–1565, 1566–1588, and 2001–2024; these read KLES…NYED, FSHL…VLSN, SIQI…SHNL, AILR…DVEV, and SSEM…SRSS. 2 disordered regions span residues 1992–2023 and 2046–2081; these read GDHV…DSRS and IPSP…SQGS. The segment covering 1998-2020 has biased composition (polar residues); sequence VSASSEMKSLDLTGSSSQVQPID. LRR repeat units follow at residues 2128-2151, 2221-2247, and 2313-2336; these read TEQI…VDPE, LLSI…LLSI, and VSAV…LDTD. A disordered region spans residues 2658-2680; the sequence is VNTDEKSETGSPIKSSSGKMDEI. Residues 2666–2675 show a composition bias toward polar residues; the sequence is TGSPIKSSSG. The BEACH-type PH domain maps to 2704-2871; that stretch reads EHLEKIRFRY…EREEVFRNLL (168 aa). Positions 2896-3188 constitute a BEACH domain; it reads GSRLFKLMAK…QLFQKPHVKR (293 aa). WD repeat units follow at residues 3272–3311, 3322–3361, 3410–3451, and 3483–3522; these read HEGN…PRGS, AHTA…FVRQ, DLIV…DPVS, and FHKQ…LKAS.

The polypeptide is BEACH domain-containing protein A2 (Arabidopsis thaliana (Mouse-ear cress)).